Reading from the N-terminus, the 383-residue chain is Protein FAM217B (383 aa).

6 disordered regions span residues 1-70 (MNAG…CQGA), 89-115 (ADED…PPDL), 200-222 (KAKG…KSPG), 232-251 (SKPL…RKKA), 284-325 (QTLE…HIRV), and 338-383 (SCKA…YKLK). Residues 8 to 43 (NKVQHSKNSSGKRQSKSQVPHASSQPRSSLTAVTQP) show a composition bias toward polar residues. Residues 44 to 56 (TEEKLKESISPEA) show a composition bias toward basic and acidic residues. Positions 374-383 (GVKQNTYKLK) are enriched in polar residues.

The protein belongs to the FAM217 family.

This Homo sapiens (Human) protein is Protein FAM217B (FAM217B).